The following is a 368-amino-acid chain: Single-stranded DNA-binding protein 3 (368 aa).

The 33-residue stretch at 16 to 48 (AREKLALYVYEYLLHVGAQKSAQTFLSEIRWEK) folds into the LisH domain. Positions 100 to 368 (PVLGNIPPND…NYSPSMTMSV (269 aa)) are disordered. The segment covering 126 to 139 (GSQPSPHAQPPPHN) has biased composition (pro residues). Composition is skewed to low complexity over residues 174 to 189 (PNMGGPMQRMNPPRGM), 211 to 220 (GPGMPGINMG), and 230 to 248 (PSSANSIPYSSSSPGTYVG). The span at 252–262 (GGGPPGTPIMP) shows a compositional bias: pro residues. Positions 265–276 (ADSTNSSDNIYT) are enriched in polar residues. The span at 295 to 305 (GSDGPMGGMGG) shows a compositional bias: gly residues. A compositionally biased stretch (low complexity) spans 326–337 (NSPNNISGISNP). Positions 353–368 (HSFQNDNYSPSMTMSV) are enriched in polar residues.

As to expression, expressed in embryonic fibroblasts and chondrocytes.

The protein localises to the nucleus. In terms of biological role, may be involved in transcription regulation of the alpha 2(I) collagen gene where it binds to the single-stranded polypyrimidine sequences in the promoter region. The chain is Single-stranded DNA-binding protein 3 (SSBP3) from Gallus gallus (Chicken).